Consider the following 359-residue polypeptide: Tropomodulin-1 (359 aa).

Positions 36 to 61 (ELDPDNALLPAGLRQKDQTTKAPTGP) are disordered. A tropomyosin-binding region spans residues 39-138 (PDNALLPAGL…CDIAAILGMH (100 aa)).

The protein belongs to the tropomodulin family. As to quaternary structure, binds to the N-terminus of tropomyosin and to actin. Interacts with FLII. Highly expressed in the erythrocyte, heart and skeletal muscle.

Its subcellular location is the cytoplasm. It is found in the cytoskeleton. In terms of biological role, blocks the elongation and depolymerization of the actin filaments at the pointed end. The Tmod/TM complex contributes to the formation of the short actin protofilament, which in turn defines the geometry of the membrane skeleton. The polypeptide is Tropomodulin-1 (Tmod1) (Mus musculus (Mouse)).